We begin with the raw amino-acid sequence, 318 residues long: tRNA U34 carboxymethyltransferase (318 aa).

Carboxy-S-adenosyl-L-methionine-binding positions include lysine 88, tryptophan 102, lysine 107, glycine 126, 176 to 177 (LE), methionine 192, tyrosine 196, and arginine 311.

It belongs to the class I-like SAM-binding methyltransferase superfamily. CmoB family. As to quaternary structure, homotetramer.

The catalysed reaction is carboxy-S-adenosyl-L-methionine + 5-hydroxyuridine(34) in tRNA = 5-carboxymethoxyuridine(34) in tRNA + S-adenosyl-L-homocysteine + H(+). Catalyzes carboxymethyl transfer from carboxy-S-adenosyl-L-methionine (Cx-SAM) to 5-hydroxyuridine (ho5U) to form 5-carboxymethoxyuridine (cmo5U) at position 34 in tRNAs. In Pseudomonas putida (strain W619), this protein is tRNA U34 carboxymethyltransferase.